The sequence spans 372 residues: GRASP65 homolog protein 1 (372 aa).

M1 carries the post-translational modification N-acetylmethionine. PDZ GRASP-type domains are found at residues 66-183 (SGLR…WTPL) and 188-276 (FTYH…YGFL). Residues 66 to 292 (SGLRIVWVDE…KHCPQQAQQQ (227 aa)) are GRASP. S155 carries the post-translational modification Phosphoserine. Residues 312–372 (VPSAFTAPPV…PPPQKQSSSD (61 aa)) are disordered.

In terms of assembly, homodimer. Interacts with BUG1 (via C-terminus), probably forming a heterooligomer consisting of a GRH1 dimer and a BUG1 dimer. Interacts with COPII coat components SEC23, SEC24, SFB2 and SFB3. In terms of processing, N-terminal acetylation; by N-terminal acetyltransferase NatC.

The protein localises to the cytoplasm. Its subcellular location is the golgi apparatus. It localises to the cis-Golgi network membrane. Its function is as follows. Involved in the spindle assembly checkpoint. Involved in ER to Golgi vesicle-mediated transport by either facilitating USO1-dependent and -independent tethering or increasing target accuracy of fusion events of COPII-coated vesicles. This chain is GRASP65 homolog protein 1 (GRH1), found in Saccharomyces cerevisiae (strain ATCC 204508 / S288c) (Baker's yeast).